The chain runs to 272 residues: Orotidine 5'-phosphate decarboxylase (272 aa).

Lys-96 serves as the catalytic Proton donor.

Belongs to the OMP decarboxylase family. Type 2 subfamily.

It catalyses the reaction orotidine 5'-phosphate + H(+) = UMP + CO2. It participates in pyrimidine metabolism; UMP biosynthesis via de novo pathway; UMP from orotate: step 2/2. This chain is Orotidine 5'-phosphate decarboxylase, found in Christiangramia forsetii (strain DSM 17595 / CGMCC 1.15422 / KT0803) (Gramella forsetii).